A 729-amino-acid chain; its full sequence is Fibroblast growth factor receptor homolog 1 (729 aa).

An N-terminal signal peptide occupies residues 1 to 36 (MAAAWSWRASHSTITMTSGSLVVLFLLLSIWQPAVQ). The Extracellular portion of the chain corresponds to 37–309 (VEGRRQMANS…VASGSLHSTS (273 aa)). A disordered region spans residues 56 to 101 (ARSQNKTPAITNNANQSSTSSADLDDGAADDDDNKADLPVNVSSKP). The span at 66–77 (TNNANQSSTSSA) shows a compositional bias: low complexity. N-linked (GlcNAc...) asparagine glycosylation is present at Asn-70. Residues 78–89 (DLDDGAADDDDN) are compositionally biased toward acidic residues. 9 N-linked (GlcNAc...) asparagine glycosylation sites follow: Asn-96, Asn-134, Asn-140, Asn-171, Asn-207, Asn-213, Asn-242, Asn-246, and Asn-282. 2 Ig-like C2-type domains span residues 106 to 192 (PKKM…VIVS) and 203 to 279 (TGPL…NSLG). A disulfide bridge links Cys-125 with Cys-174. Cysteines 220 and 272 form a disulfide. Residues 310–330 (FVYIFVFGGLIFIFMTTLFVF) form a helical membrane-spanning segment. The Cytoplasmic portion of the chain corresponds to 331-729 (YAIRKMKHEK…TDNLQKWCNY (399 aa)). Residues 416 to 692 (LVLGATLGEG…EIVEYMDKLL (277 aa)) form the Protein kinase domain. ATP is bound by residues 422–430 (LGEGAFGRV) and Lys-443. Asp-556 functions as the Proton acceptor in the catalytic mechanism. The residue at position 587 (Tyr-587) is a Phosphotyrosine; by autocatalysis.

It belongs to the protein kinase superfamily. Tyr protein kinase family. Fibroblast growth factor receptor subfamily. In early embryos, expression is specific to mesodermal primordium and invaginated mesodermal cells. At later stages, expression is seen in putative muscle precursor cells and in the CNS.

Its subcellular location is the membrane. The enzyme catalyses L-tyrosyl-[protein] + ATP = O-phospho-L-tyrosyl-[protein] + ADP + H(+). May be required for patterning of muscle precursor cells. May be essential for generation of mesodermal and endodermal layers, invaginations of various types of cells and CNS formation. The sequence is that of Fibroblast growth factor receptor homolog 1 (htl) from Drosophila melanogaster (Fruit fly).